The sequence spans 413 residues: Histidine--tRNA ligase (413 aa).

This sequence belongs to the class-II aminoacyl-tRNA synthetase family. Homodimer.

The protein localises to the cytoplasm. It catalyses the reaction tRNA(His) + L-histidine + ATP = L-histidyl-tRNA(His) + AMP + diphosphate + H(+). The sequence is that of Histidine--tRNA ligase from Neorickettsia sennetsu (strain ATCC VR-367 / Miyayama) (Ehrlichia sennetsu).